A 241-amino-acid chain; its full sequence is Small ribosomal subunit protein uS3c (241 aa).

Belongs to the universal ribosomal protein uS3 family. In terms of assembly, part of the 30S ribosomal subunit.

It localises to the plastid. The sequence is that of Small ribosomal subunit protein uS3c (rps3) from Helicosporidium sp. subsp. Simulium jonesii (Green alga).